Here is a 165-residue protein sequence, read N- to C-terminus: Xanthine-guanine phosphoribosyltransferase (165 aa).

5-phospho-alpha-D-ribose 1-diphosphate-binding positions include 41 to 42 (RG) and 98 to 106 (DDLTDTGKT). Mg(2+) is bound at residue Asp99. Residues Asp102 and Ile145 each coordinate guanine. Positions 102 and 145 each coordinate xanthine. Residues 102–106 (DTGKT) and 144–145 (WI) contribute to the GMP site.

It belongs to the purine/pyrimidine phosphoribosyltransferase family. XGPT subfamily. In terms of assembly, homotetramer. Mg(2+) serves as cofactor.

It localises to the cell inner membrane. It catalyses the reaction GMP + diphosphate = guanine + 5-phospho-alpha-D-ribose 1-diphosphate. It carries out the reaction XMP + diphosphate = xanthine + 5-phospho-alpha-D-ribose 1-diphosphate. The enzyme catalyses IMP + diphosphate = hypoxanthine + 5-phospho-alpha-D-ribose 1-diphosphate. It participates in purine metabolism; GMP biosynthesis via salvage pathway; GMP from guanine: step 1/1. It functions in the pathway purine metabolism; XMP biosynthesis via salvage pathway; XMP from xanthine: step 1/1. In terms of biological role, purine salvage pathway enzyme that catalyzes the transfer of the ribosyl-5-phosphate group from 5-phospho-alpha-D-ribose 1-diphosphate (PRPP) to the N9 position of the 6-oxopurines guanine and xanthine to form the corresponding ribonucleotides GMP (guanosine 5'-monophosphate) and XMP (xanthosine 5'-monophosphate), with the release of PPi. To a lesser extent, also acts on hypoxanthine. This is Xanthine-guanine phosphoribosyltransferase from Brucella anthropi (strain ATCC 49188 / DSM 6882 / CCUG 24695 / JCM 21032 / LMG 3331 / NBRC 15819 / NCTC 12168 / Alc 37) (Ochrobactrum anthropi).